The chain runs to 155 residues: 6,7-dimethyl-8-ribityllumazine synthase (155 aa).

Residues Phe-22, 56–58 (AFE), and 80–82 (AVI) contribute to the 5-amino-6-(D-ribitylamino)uracil site. 85–86 (ST) is a (2S)-2-hydroxy-3-oxobutyl phosphate binding site. His-88 acts as the Proton donor in catalysis. Phe-113 is a binding site for 5-amino-6-(D-ribitylamino)uracil. Arg-127 is a (2S)-2-hydroxy-3-oxobutyl phosphate binding site.

It belongs to the DMRL synthase family.

The catalysed reaction is (2S)-2-hydroxy-3-oxobutyl phosphate + 5-amino-6-(D-ribitylamino)uracil = 6,7-dimethyl-8-(1-D-ribityl)lumazine + phosphate + 2 H2O + H(+). The protein operates within cofactor biosynthesis; riboflavin biosynthesis; riboflavin from 2-hydroxy-3-oxobutyl phosphate and 5-amino-6-(D-ribitylamino)uracil: step 1/2. In terms of biological role, catalyzes the formation of 6,7-dimethyl-8-ribityllumazine by condensation of 5-amino-6-(D-ribitylamino)uracil with 3,4-dihydroxy-2-butanone 4-phosphate. This is the penultimate step in the biosynthesis of riboflavin. This is 6,7-dimethyl-8-ribityllumazine synthase from Caldicellulosiruptor bescii (strain ATCC BAA-1888 / DSM 6725 / KCTC 15123 / Z-1320) (Anaerocellum thermophilum).